A 305-amino-acid polypeptide reads, in one-letter code: Translation initiation factor eIF2B subunit alpha (305 aa).

N6-acetyllysine is present on Lys-35.

It belongs to the eIF-2B alpha/beta/delta subunits family. In terms of assembly, component of the translation initiation factor 2B (eIF2B) complex which is a heterodecamer of two sets of five different subunits: alpha, beta, gamma, delta and epsilon. Subunits alpha, beta and delta comprise a regulatory subcomplex and subunits epsilon and gamma comprise a catalytic subcomplex. Within the complex, the hexameric regulatory complex resides at the center, with the two heterodimeric catalytic subcomplexes bound on opposite sides.

The protein resides in the cytoplasm. Its subcellular location is the cytosol. Its activity is regulated as follows. Activated by the chemical integrated stress response (ISR) inhibitor ISRIB which stimulates guanine nucleotide exchange factor activity for both phosphorylated and unphosphorylated eIF2. Acts as a component of the translation initiation factor 2B (eIF2B) complex, which catalyzes the exchange of GDP for GTP on eukaryotic initiation factor 2 (eIF2) gamma subunit. Its guanine nucleotide exchange factor activity is repressed when bound to eIF2 complex phosphorylated on the alpha subunit, thereby limiting the amount of methionyl-initiator methionine tRNA available to the ribosome and consequently global translation is repressed. The chain is Translation initiation factor eIF2B subunit alpha (EIF2B1) from Pongo abelii (Sumatran orangutan).